A 488-amino-acid polypeptide reads, in one-letter code: L-arabinose isomerase 2 (488 aa).

Mn(2+) is bound by residues Glu306, Glu331, His348, and His447.

It belongs to the arabinose isomerase family. Mn(2+) is required as a cofactor.

It carries out the reaction beta-L-arabinopyranose = L-ribulose. Its pathway is carbohydrate degradation; L-arabinose degradation via L-ribulose; D-xylulose 5-phosphate from L-arabinose (bacterial route): step 1/3. Functionally, catalyzes the conversion of L-arabinose to L-ribulose. This chain is L-arabinose isomerase 2, found in Clostridium acetobutylicum (strain ATCC 824 / DSM 792 / JCM 1419 / IAM 19013 / LMG 5710 / NBRC 13948 / NRRL B-527 / VKM B-1787 / 2291 / W).